A 188-amino-acid chain; its full sequence is Adenine phosphoribosyltransferase (188 aa).

It belongs to the purine/pyrimidine phosphoribosyltransferase family. As to quaternary structure, homodimer.

The protein localises to the cytoplasm. It catalyses the reaction AMP + diphosphate = 5-phospho-alpha-D-ribose 1-diphosphate + adenine. Its pathway is purine metabolism; AMP biosynthesis via salvage pathway; AMP from adenine: step 1/1. In terms of biological role, catalyzes a salvage reaction resulting in the formation of AMP, that is energically less costly than de novo synthesis. In Neisseria meningitidis serogroup C (strain 053442), this protein is Adenine phosphoribosyltransferase.